The following is a 400-amino-acid chain: Ribosomal RNA large subunit methyltransferase I (400 aa).

One can recognise a PUA domain in the interval 6–84; it reads FPRLVLAKGR…NEAIDSAFFE (79 aa).

This sequence belongs to the methyltransferase superfamily. RlmI family.

The protein localises to the cytoplasm. The enzyme catalyses cytidine(1962) in 23S rRNA + S-adenosyl-L-methionine = 5-methylcytidine(1962) in 23S rRNA + S-adenosyl-L-homocysteine + H(+). In terms of biological role, specifically methylates the cytosine at position 1962 (m5C1962) of 23S rRNA. This is Ribosomal RNA large subunit methyltransferase I from Klebsiella pneumoniae subsp. pneumoniae (strain ATCC 700721 / MGH 78578).